The chain runs to 306 residues: Protein YIPF1 (306 aa).

The Cytoplasmic segment spans residues 1–119 (MAAVDDLQFE…VRLYIRSNPD (119 aa)). The segment at 30-63 (IEDPSVSFGHQPRPPGSVGREEDEELLGNNDSDE) is disordered. Positions 50–63 (EEDEELLGNNDSDE) are enriched in acidic residues. The helical transmembrane segment at 120–140 (LYGPFWICATLVFAIAISGNL) threads the bilayer. The Lumenal portion of the chain corresponds to 141 to 162 (SNFLIHLGEKTYHYVPEFQKVS). The chain crosses the membrane as a helical span at residues 163–183 (IAATVIYAYAWLVPLALWGFL). At 184–200 (LWRNSKVMSMVSYSFLE) the chain is on the cytoplasmic side. A helical transmembrane segment spans residues 201 to 221 (IVCVYGYSLFIYIPTAVLWII). Residues 222–227 (PQRVVR) lie on the Lumenal side of the membrane. The helical transmembrane segment at 228–248 (WVLVMIALGVSGSVLVMTFWP) threads the bilayer. The Cytoplasmic portion of the chain corresponds to 249–256 (AVREDNRR). The chain crosses the membrane as a helical span at residues 257-277 (VALATIVTIVLLHVLLSVGCL). At 278–306 (AYFFDAPEMDHLPAAITTPNQTVTAAKSS) the chain is on the lumenal side. N-linked (GlcNAc...) asparagine glycosylation occurs at Asn297.

The protein belongs to the YIP1 family. Interacts with YIPF6; this interaction may stabilize YIPF1. May also form a ternary complex with YIPF2 and YIPF6.

The protein resides in the golgi apparatus. It is found in the cis-Golgi network membrane. The protein localises to the trans-Golgi network membrane. Its subcellular location is the late endosome membrane. The chain is Protein YIPF1 (Yipf1) from Mus musculus (Mouse).